The primary structure comprises 44 residues: Peptide Hact-4 (44 aa).

3 disulfide bridges follow: Cys-8–Cys-42, Cys-15–Cys-34, and Cys-20–Cys-43.

As to expression, expressed in tentacles.

Its subcellular location is the nematocyst. The protein resides in the secreted. Its function is as follows. Peptide with unknown function. Does not exhibit antimicrobial activity against Escherichia coli and Staphylococcus aureus. Does not exhibit any effect on human ion channel TRPV1 in a Xenopus laevis oocytes assay. The sequence is that of Peptide Hact-4 from Heliofungia actiniformis (Mushroom coral).